We begin with the raw amino-acid sequence, 416 residues long: Interleukin-1 receptor type 2 (416 aa).

The first 13 residues, 1–13 (MFILLVLVTGVSA), serve as a signal peptide directing secretion. The Extracellular segment spans residues 14 to 355 (FTTPAVVHTG…FQSLHTTVKE (342 aa)). 3 consecutive Ig-like C2-type domains span residues 29-136 (PVTS…LELK), 146-233 (PLVS…YNIT), and 249-357 (PVII…KEVS). 3 disulfides stabilise this stretch: C42/C128, C64/C120, and C164/C219. N-linked (GlcNAc...) asparagine glycosylation is found at N124, N208, N231, and N289. C270 and C338 are disulfide-bonded. The helical transmembrane segment at 356 to 381 (VSSTFSWGIALAPLSLIILVVGAIWI) threads the bilayer. Residues 382 to 416 (RRRCKRQAGKTYGLTKLPTDNQDFPSSPNQIKEMK) lie on the Cytoplasmic side of the membrane. The interval 396 to 416 (TKLPTDNQDFPSSPNQIKEMK) is disordered. Over residues 399 to 416 (PTDNQDFPSSPNQIKEMK) the composition is skewed to polar residues.

The protein belongs to the interleukin-1 receptor family. Associates with IL1RAP to form a non-signaling interleukin-1 receptor complex. Post-translationally, a soluble form (sIL1R2) can also be produced by proteolytic cleavage at the cell surface (shedding) involving a metalloproteinase.

The protein localises to the membrane. It is found in the cell membrane. Its subcellular location is the secreted. Its function is as follows. Non-signaling receptor for IL1A, IL1B and IL1RN. Reduces IL1B activities. Serves as a decoy receptor by competitive binding to IL1B and preventing its binding to IL1R1. Also modulates cellular response through non-signaling association with IL1RAP after binding to IL1B. IL1R2 (membrane and secreted forms) preferentially binds IL1B and poorly IL1A and IL1RN. The secreted IL1R2 recruits secreted IL1RAP with high affinity; this complex formation may be the dominant mechanism for neutralization of IL1B by secreted/soluble receptors. The polypeptide is Interleukin-1 receptor type 2 (Il1r2) (Rattus norvegicus (Rat)).